The following is a 977-amino-acid chain: Zinc finger CCCH domain-containing protein 7B (977 aa).

3 TPR repeats span residues 1–27, 36–69, and 82–115; these read MERQ…KQEE, VQNL…ADYA, and CKLH…DSES. Ser-217 carries the phosphoserine modification. The LD motif; interaction with NSP3 signature appears at 248–256; sequence STDSLDDFS. Phosphoserine is present on residues Ser-364 and Ser-367. Residues 365-403 form a disordered region; that stretch reads FGSTRGSLDKPDSFMEETNSQDHRPPSGAQKPAPSPEPC. 3 C3H1-type zinc fingers span residues 484–508, 616–638, and 754–782; these read LCKD…HQEE, VCRH…HSFI, and PQQY…HSPE. Residues 842–866 form a C2H2-type zinc finger; sequence YHCWLCGKNSNSKKQWQQHIQSEKH. The C3H1-type 4 zinc-finger motif lies at 886-914; it reads MGEFRLCDRLQKGKACPDGDKCRCAHGQE.

(Microbial infection) Interacts (via LD motif) with rotavirus A NSP3 (via the coiled-coil region).

Its subcellular location is the nucleus. May be a specific regulator of miRNA biogenesis. Binds to microRNAs MIR7-1, MIR16-2 and MIR29A hairpins recognizing the 'ATA(A/T)' motif in the apical loop. In Homo sapiens (Human), this protein is Zinc finger CCCH domain-containing protein 7B (ZC3H7B).